Consider the following 68-residue polypeptide: Large ribosomal subunit protein uL29 (68 aa).

Belongs to the universal ribosomal protein uL29 family.

The sequence is that of Large ribosomal subunit protein uL29 from Erythrobacter litoralis (strain HTCC2594).